Consider the following 321-residue polypeptide: Ribosomal RNA small subunit methyltransferase H (321 aa).

S-adenosyl-L-methionine is bound by residues 34–36 (GGH), Asp-54, Phe-80, Asp-102, and Gln-109.

Belongs to the methyltransferase superfamily. RsmH family.

The protein resides in the cytoplasm. It catalyses the reaction cytidine(1402) in 16S rRNA + S-adenosyl-L-methionine = N(4)-methylcytidine(1402) in 16S rRNA + S-adenosyl-L-homocysteine + H(+). Functionally, specifically methylates the N4 position of cytidine in position 1402 (C1402) of 16S rRNA. This chain is Ribosomal RNA small subunit methyltransferase H, found in Blochmanniella floridana.